The following is a 293-amino-acid chain: Lysosomal amino acid transporter 1 homolog (293 aa).

At 1 to 37 (MVWRTLGASNFSTCPNGSVQWIWDVFGECAQDGWDEA) the chain is on the lumenal side. N-linked (GlcNAc...) asparagine glycosylation is found at N10 and N16. Residues 34–100 (WDEASVGLGL…LADQLPLQTY (67 aa)) form the PQ-loop 1 domain. Residues 38–58 (SVGLGLVSILCFAASTFPQYI) form a helical membrane-spanning segment. At 59-71 (KACKTGNMDQALS) the chain is on the cytoplasmic side. Residues 72-92 (LWFLLGWIGGDSCNLIGSFLA) traverse the membrane as a helical segment. Over 93-96 (DQLP) the chain is Lumenal. A helical membrane pass occupies residues 97 to 117 (LQTYTAVYYVLADLMMLTLYF). Over 118 to 127 (HYKFKKRPSP) the chain is Cytoplasmic. Residues 128-148 (LSAPINSVLLFILGTVCITPL) traverse the membrane as a helical segment. At 149–182 (LSSTDPVAVPREGFRGRTLLSVEPGNKPFTKKEV) the chain is on the lumenal side. Residues 183 to 203 (IGFVIGSASSLLYLLSRLPQI) traverse the membrane as a helical segment. In terms of domain architecture, PQ-loop 2 spans 191–243 (SSLLYLLSRLPQIRTNFIRQSTQGISYSLFALVMLGNTLYGLSVLLKNPEVGQ). The Cytoplasmic segment spans residues 204–214 (RTNFIRQSTQG). The chain crosses the membrane as a helical span at residues 215–235 (ISYSLFALVMLGNTLYGLSVL). The Lumenal portion of the chain corresponds to 236–254 (LKNPEVGQSEGSYLLHHLP). Residues 255 to 275 (WLVGSLGVLLLDTIISIQFLV) traverse the membrane as a helical segment. Residues 276–293 (YRSHETAAASEREPLLPS) lie on the Cytoplasmic side of the membrane. Positions 290–291 (LL) match the Di-leucine motif motif.

Belongs to the laat-1 family. As to expression, ubiquitously expressed.

It localises to the lysosome membrane. Functionally, amino acid transporter that specifically mediates the pH-dependent export of the cationic amino acids arginine, histidine and lysine from lysosomes. The chain is Lysosomal amino acid transporter 1 homolog from Mus musculus (Mouse).